An 838-amino-acid chain; its full sequence is Probable inorganic carbon transporter subunit DabA (838 aa).

Zn(2+)-binding residues include Cys-353, Asp-355, His-537, and Cys-552.

This sequence belongs to the inorganic carbon transporter (TC 9.A.2) DabA family. In terms of assembly, forms a complex with DabB. Zn(2+) serves as cofactor.

It localises to the cell membrane. Part of an energy-coupled inorganic carbon pump. The chain is Probable inorganic carbon transporter subunit DabA from Roseiflexus sp. (strain RS-1).